Reading from the N-terminus, the 3046-residue chain is MRGRRGRPPKQPAAPAAERCAPAPPPPPPPPTSGPIGGLRSRHRGSSRGRWAAAQAEVAPKTRLSSPRGGSSSRRKPPPPPPAPPSTSAPGRGGRGGGGGRTGGGGGGGHLARTTAARRAVNKVVYDDHESEEEEEEEDMVSEEEEEEDGDAEETQDSEDDEEDEMEEDDDDSDYPEEMEDDDDDASYCTESSFRSHSTYSSTPGRRKPRVHRPRSPILEEKDIPPLEFPKSSEDLMVPNEHIMNVIAIYEVLRNFGTVLRLSPFRFEDFCAALVSQEQCTLMAEMHVVLLKAVLREEDTSNTTFGPADLKDSVNSTLYFIDGMTWPEVLRVYCESDKEYHHVLPYQEAEDYPYGPVENKIKVLQFLVDQFLTTNIAREELMSEGVIQYDDHCRVCHKLGDLLCCETCSAVYHLECVKPPLEEVPEDEWQCEVCVAHKVPGVTDCVAEIQKNKPYIRHEPIGYDRSRRKYWFLNRRLIIEEDTENENEKKIWYYSTKVQLAELIDCLDKDYWEAELCKILEEMREEIHRHMDITEDLTNKARGSNKSFLAAANEEILESIRAKKGDIDNVKSPEETEKDKNETENDSKDAEKNREEFEDQSLEKDSDDKTPDDDPEQGKSEEPTEVGDKGNSVSANLGDNTTNATSEETSPSEGRSPVGCLSETPDSSNMAEKKVASELPQDVPEEPNKTCESSNTSATTTSIQPNLENSNSSSELNSSQSESAKAADDPENGERESHTPVSIQEEIVGDFKSEKSNGELSESPGAGKGASGSTRIITRLRNPDSKLSQLKSQQVAAAAHEANKLFKEGKEVLVVNSQGEISRLSTKKEVIMKGNINNYFKLGQEGKYRVYHNQYSTNSFALNKHQHREDHDKRRHLAHKFCLTPAGEFKWNGSVHGSKVLTISTLRLTITQLENNIPSSFLHPNWASHRANWIKAVQMCSKPREFALALAILECAVKPVVMLPIWRESLGHTRLHRMTSIEREEKEKVKKKEKKQEEEETMQQATWVKYTFPVKHQVWKQKGEEYRVTGYGGWSWISKTHVYRFVPKLPGNTNVNYRKSLEGTKNNMDENMDESDKRKCSRSPKKIKIEPDSEKDEVKGSDAAKGADQNEMDISKITEKKDQDVKELLDSDSDKPCKEEPMEVDDDMKTESHVNCQESSQVDVVNVSEGFHLRTSYKKKTKSSKLDGLLERRIKQFTLEEKQRLEKIKLEGGIKGIGKTSTNSSKNLSESPVITKAKEGCQSDSMRQEQSPNANNDQPEDLIQGCSESDSSVLRMSDPSHTTNKLYPKDRVLDDVSIRSPETKCPKQNSIENDIEEKVSDLASRGQEPSKSKTKGNDFFIDDSKLASADDIGTLICKNKKPLIQEESDTIVSSSKSALHSSVPKSTNDRDATPLSRAMDFEGKLGCDSESNSTLENSSDTVSIQDSSEEDMIVQNSNESISEQFRTREQDVEVLEPLKCELVSGESTGNCEDRLPVKGTEANGKKPSQQKKLEERPVNKCSDQIKLKNTTDKKNNENRESEKKGQRTSTFQINGKDNKPKIYLKGECLKEISESRVVSGNVEPKVNNINKIIPENDIKSLTVKESAIRPFINGDVIMEDFNERNSSETKSHLLSSSDAEGNYRDSLETLPSTKESDSTQTTTPSASCPESNSVNQVEDMEIETSEVKKVTSSPITSEEESNLSNDFIDENGLPINKNENVNGESKRKTVITEVTTMTSTVATESKTVIKVEKGDKQTVVSSTENCAKSTVTTTTTTVTKLSTPSTGGSVDIISVKEQSKTVVTTTVTDSLTTTGGTLVTSMTVSKEYSTRDKVKLMKFSRPKKTRSGTALPSYRKFVTKSSKKSIFVLPNDDLKKLARKGGIREVPYFNYNAKPALDIWPYPSPRPTFGITWRYRLQTVKSLAGVSLMLRLLWASLRWDDMAAKAPPGGGTTRTETSETEITTTEIIKRRDVGPYGIRSEYCIRKIICPIGVPETPKETPTPQRKGLRSSALRPKRPETPKQTGPVIIETWVAEEELELWEIRAFAERVEKEKAQAVEQQAKKRLEQQKPTVIATSTTSPTSSTTSTISPAQKVMVAPISGSVTTGTKMVLTTKVGSPATVTFQQNKNFHQTFATWVKQGQSNSGVVQVQQKVLGIIPSSTGTSQQTFTSFQPRTATVTIRPNTSGSGGTTSNSQVITGPQIRPGMTVIRTPLQQSTLGKAIIRTPVMVQPGAPQQVMTQIIRGQPVSTAVSAPNTVSSTPGQKSLTSATSTSNIQSSASQPPRPQQGQVKLTMAQLTQLTQGHGGNQGLTVVIQGQGQTTGQLQLIPQGVTVLPGPGQQLMQAAMPNGTVQRFLFTPLATTATTASTTTTTVSTTAAGTGEQRQSKLSPQMQVHQDKTLPPAQSSSVGPAEAQPQTAQPSAQPQPQTQPQSPAQPEVQTQPEVQTQTTVSSHVPSEAQPTHAQSSKPQVAAQSQPQSNVQGQSPVRVQSPSQTRIRPSTPSQLSPGQQSQVQTTTSQPIPIQPHTSLQIPSQGQPQSQPQVQSSTQTLSSGQTLNQVTVSSPSRPQLQIQQPQPQVIAVPQLQQQVQVLSQIQSQVVAQIQAQQSGVPQQIKLQLPIQIQQSSAVQTHQIQNVVTVQAASVQEQLQRVQQLRDQQQKKKQQQIEIKREHTLQASNQSEIIQKQVVMKHNAVIEHLKQKKSMTPAEREENQRMIVCNQVMKYILDKIDKEEKQAAKKRKREESVEQKRSKQNATKLSALLFKHKEQLRAEILKKRALLDKDLQIEVQEELKRDLKIKKEKDLMQLAQATAVAAPCPPVTPAPPAPPAPPPSPPPPPAVQHTGLLSTPTLPAASQKRKREEEKDSSSKSKKKKMISTTSKETKKDTKLYCICKTPYDESKFYIGCDRCQNWYHGRCVGILQSEAELIDEYVCPQCQSTEDAMTVLTPLTEKDYEGLKRVLRSLQAHKMAWPFLEPVDPNDAPDYYGVIKEPMDLATMEERVQRRYYEKLTEFVADMTKIFDNCRYYNPSDSPFYQCAEVLESFFVQKLKGFKASRSHNNKLQSTAS.

The disordered stretch occupies residues Met1–Ser232. A compositionally biased stretch (pro residues) spans Pro22 to Ser33. Residues Thr62–Ser72 show a composition bias toward low complexity. The segment covering Pro78 to Thr87 has biased composition (pro residues). Residues Gly91–His110 show a composition bias toward gly residues. Positions His129–Ala186 are enriched in acidic residues. The span at Thr190 to Thr203 shows a compositional bias: low complexity. Positions Gly205–Arg215 are enriched in basic residues. A Phosphoserine modification is found at Ser216. One can recognise a DDT domain in the interval Asn240 to Thr300. The PHD-type 1 zinc-finger motif lies at Asp390–His437. Basic and acidic residues-rich tracts occupy residues Ile567–Lys609 and Glu616–Asp628. A disordered region spans residues Ile567 to Thr774. Ser572 carries the phosphoserine modification. A coiled-coil region spans residues Glu574–Lys604. Composition is skewed to polar residues over residues Asn631–Glu653 and Thr690–Pro705. The interaction with KEAP1 stretch occupies residues Asn640–Gly749. Residues Asn706 to Ser723 show a composition bias toward low complexity. The segment covering Lys725 to His738 has biased composition (basic and acidic residues). Phosphoserine is present on residues Ser763 and Ser817. Positions Tyr839–Phe921 are interaction with MAZ. Lys880 is subject to N6-acetyllysine. Residues Met978–Trp1007 adopt a coiled-coil conformation. The tract at residues Tyr1057 to Gln1157 is disordered. A Phosphothreonine modification is found at Thr1064. Basic and acidic residues-rich tracts occupy residues Ile1087–Asp1102 and Asp1113–Ser1152. Residues Lys1088, Lys1138, and Lys1209 each participate in a glycyl lysine isopeptide (Lys-Gly) (interchain with G-Cter in SUMO2) cross-link. Disordered regions lie at residues Lys1215–Phe1339, Ile1371–Arg1448, Gly1465–Asp1537, and Asn1605–Lys1706. Composition is skewed to polar residues over residues Thr1220–Pro1232, Gln1242–Asp1257, and Cys1266–Lys1285. Ser1231 bears the Phosphoserine mark. Positions Tyr1287 to Cys1305 are enriched in basic and acidic residues. Ser1300 bears the Phosphoserine mark. Thr1303 is subject to Phosphothreonine. Phosphoserine is present on Ser1310. The span at Val1372–Ser1386 shows a compositional bias: low complexity. 2 stretches are compositionally biased toward polar residues: residues Ser1409–Asp1426 and Val1434–Gln1444. Residues Lys1491 to Gly1525 show a composition bias toward basic and acidic residues. The span at Thr1629 to Gln1656 shows a compositional bias: polar residues. Lys1730 participates in a covalent cross-link: Glycyl lysine isopeptide (Lys-Gly) (interchain with G-Cter in SUMO2). Disordered stretches follow at residues Val1973 to Gln2003 and Gln2041 to Ser2070. A coiled-coil region spans residues Glu2022–Lys2050. The segment covering Ile2054–Ser2070 has biased composition (low complexity). Ser2098 is modified (phosphoserine). Position 2155 is an omega-N-methylarginine (Arg2155). Positions Thr2160 to Gly2180 are disordered. Residues Arg2162, Arg2184, and Arg2191 each carry the asymmetric dimethylarginine modification. Residues Val2232–Ile2256 show a composition bias toward polar residues. Disordered regions lie at residues Val2232–Gln2270, Thr2346–Leu2549, Gln2714–Asn2733, and Pro2795–Thr2858. Low complexity-rich tracts occupy residues Gln2257–Gln2270 and Thr2346–Gly2362. The segment covering Glu2363 to Val2375 has biased composition (polar residues). Over residues Pro2391–Val2431 the composition is skewed to low complexity. Over residues Ser2432–Leu2485 the composition is skewed to polar residues. Position 2465 is a phosphoserine (Ser2465). The segment covering Ser2486–Gln2538 has biased composition (low complexity). Positions Asp2706 to Gln2732 form a coiled coil. Basic and acidic residues predominate over residues Gln2714–Arg2729. The span at Pro2795–Ala2818 shows a compositional bias: pro residues. A compositionally biased stretch (basic and acidic residues) spans Lys2838–Ser2847. The PHD-type 2 zinc finger occupies Lys2867–Thr2918. The Bromo domain occupies Pro2927–Phe3031.

The protein belongs to the PBTF family. In terms of assembly, interacts with MAZ. Interacts with KEAP1. Component of the NURF-1 ISWI chromatin remodeling complex (also called the nucleosome-remodeling factor (NURF) complex) at least composed of SMARCA1 (isoform 2), BPTF, RBBP4 and RBBP7. Within the complex interacts with isoform 2 of SMARCA1. Component of the BPFT-SMARCA1 complex at least composed of SMARCA1 (isoform 1), BPFT, RBBP4 and RBBP7; the complex is catalytically inactive and does not remodel chromatin. Within the complex interacts with isoform 1 of SMARCA1. Component of the NURF-5 ISWI chromatin remodeling complex at least composed of SMARCA5/SNF2H and BPTF. Within NURF-5 ISWI chromatin remodeling complex interacts with SMARCA5/SNF2H. Post-translationally, phosphorylation enhances DNA-binding. Highly susceptible to proteolysis. As to expression, ubiquitously expressed, with highest levels in testis. Present in kidney, liver and brain. In the brain, highest levels are found in motor cortex (at protein level).

It localises to the cytoplasm. It is found in the nucleus. In terms of biological role, regulatory subunit of the ATP-dependent NURF-1 and NURF-5 ISWI chromatin remodeling complexes, which form ordered nucleosome arrays on chromatin and facilitate access to DNA during DNA-templated processes such as DNA replication, transcription, and repair. The NURF-1 ISWI chromatin remodeling complex has a lower ATP hydrolysis rate than the NURF-5 ISWI chromatin remodeling complex. Within the NURF-1 ISWI chromatin-remodeling complex, binds to the promoters of En1 and En2 to positively regulate their expression and promote brain development. Histone-binding protein which binds to H3 tails trimethylated on 'Lys-4' (H3K4me3), which mark transcription start sites of active genes. Binds to histone H3 tails dimethylated on 'Lys-4' (H3K4Me2) to a lesser extent. May also regulate transcription through direct binding to DNA or transcription factors. The polypeptide is Nucleosome-remodeling factor subunit BPTF (BPTF) (Homo sapiens (Human)).